Consider the following 240-residue polypeptide: Endo-chitosanase B (240 aa).

Residues 1–17 (MRLSEILAVALVTGATA) form the signal peptide. N-linked (GlcNAc...) asparagine glycosylation occurs at Asn86.

The protein belongs to the glycosyl hydrolase 75 family.

The protein resides in the secreted. The enzyme catalyses Endohydrolysis of beta-(1-&gt;4)-linkages between D-glucosamine residues in a partly acetylated chitosan.. In terms of biological role, chitosanase catalyzing the endo-type cleavage of chitosan, the deacylated form of chitin. Chitosanase may be crucial in the degradation of the deacetylated portion of chitin in the fungal cell wall. Chitoolisaccharides produced by the hydrolysis of partially N-acetylated chitosan are known to have many biological activities, including antibacterial activity, immune-enhancing effects, and elicitor activity. This is Endo-chitosanase B (csnB) from Aspergillus oryzae (Yellow koji mold).